Here is a 257-residue protein sequence, read N- to C-terminus: MPLFYETEVRSRLLLGTARYPSPAVLAEAVRRSGTDIVTVSLRRETAGGRQGGAFFELIRELGVRVLPNTAGCHSVSEAVLTARMAREVFGTDWIKLEVIGHQDTLQPDVFGLVEGARILTGEGFQVFPYTTDDLVVAERLLEAGCQVLMPWCAPIGSAMGPQNVQGLRAMRAEFPDVPLIVDAGIGRPSHATTVMELGYDAVLLNTAVAGAADPAAMAEAFTKAIDAGHAAHGAGMLEPRDMAVPSTPVIGKAVFS.

Residue Lys96 is the Schiff-base intermediate with DXP of the active site. 1-deoxy-D-xylulose 5-phosphate-binding positions include Gly157, 184–185 (AG), and 206–207 (NT).

The protein belongs to the ThiG family. In terms of assembly, homotetramer. Forms heterodimers with either ThiH or ThiS.

Its subcellular location is the cytoplasm. The catalysed reaction is [ThiS sulfur-carrier protein]-C-terminal-Gly-aminoethanethioate + 2-iminoacetate + 1-deoxy-D-xylulose 5-phosphate = [ThiS sulfur-carrier protein]-C-terminal Gly-Gly + 2-[(2R,5Z)-2-carboxy-4-methylthiazol-5(2H)-ylidene]ethyl phosphate + 2 H2O + H(+). It participates in cofactor biosynthesis; thiamine diphosphate biosynthesis. Catalyzes the rearrangement of 1-deoxy-D-xylulose 5-phosphate (DXP) to produce the thiazole phosphate moiety of thiamine. Sulfur is provided by the thiocarboxylate moiety of the carrier protein ThiS. In vitro, sulfur can be provided by H(2)S. The sequence is that of Thiazole synthase from Rhizobium meliloti (strain 1021) (Ensifer meliloti).